The primary structure comprises 262 residues: tRNA pseudouridine synthase B (262 aa).

The active-site Nucleophile is Asp77.

It belongs to the pseudouridine synthase TruB family. Type 1 subfamily.

The enzyme catalyses uridine(55) in tRNA = pseudouridine(55) in tRNA. Functionally, responsible for synthesis of pseudouridine from uracil-55 in the psi GC loop of transfer RNAs. The polypeptide is tRNA pseudouridine synthase B (Protochlamydia amoebophila (strain UWE25)).